Reading from the N-terminus, the 169-residue chain is E1B protein, small T-antigen (169 aa).

The protein belongs to the adenoviridae E1B 19 kDa protein family.

This chain is E1B protein, small T-antigen, found in Canine adenovirus serotype 1 (strain CLL) (CAdV-1).